The chain runs to 269 residues: Malonyl-[acyl-carrier protein] O-methyltransferase (269 aa).

It belongs to the methyltransferase superfamily.

It carries out the reaction malonyl-[ACP] + S-adenosyl-L-methionine = malonyl-[ACP] methyl ester + S-adenosyl-L-homocysteine. It participates in cofactor biosynthesis; biotin biosynthesis. In terms of biological role, converts the free carboxyl group of a malonyl-thioester to its methyl ester by transfer of a methyl group from S-adenosyl-L-methionine (SAM). It allows to synthesize pimeloyl-ACP via the fatty acid synthetic pathway. This Bacillus cereus (strain ATCC 14579 / DSM 31 / CCUG 7414 / JCM 2152 / NBRC 15305 / NCIMB 9373 / NCTC 2599 / NRRL B-3711) protein is Malonyl-[acyl-carrier protein] O-methyltransferase.